A 115-amino-acid polypeptide reads, in one-letter code: Type 3 secretion system chaperone PscG (115 aa).

Belongs to the YscG family. In terms of assembly, forms a stable heterotrimeric complex with PscE and PscF/SctF in the cytoplasm. Co-stabilized by PscE.

The protein localises to the cytoplasm. Chaperone of the type III secretion system (T3SS), also called injectisome, which is used to inject bacterial effector proteins into eukaryotic host cells, facilitating the establishment and dissemination of infection. Along with PscE, prevents premature polymerization of the PscF/SctF needle protein within the cytoplasm. Required for type III secretion needle assembly. Also required for cytotoxicity by influencing PscF/SctF levels. The chain is Type 3 secretion system chaperone PscG (pscG) from Pseudomonas aeruginosa (strain ATCC 15692 / DSM 22644 / CIP 104116 / JCM 14847 / LMG 12228 / 1C / PRS 101 / PAO1).